We begin with the raw amino-acid sequence, 224 residues long: Pro-thyrotropin-releasing hormone-B (224 aa).

An N-terminal signal peptide occupies residues 1–15 (MMFLWWLLLLGTAIS). Residue Gln75 is modified to Pyrrolidone carboxylic acid. Pro77 is modified (proline amide). The segment covering 86-101 (EKRQHPGKRDLEDLQL) has biased composition (basic and acidic residues). Disordered stretches follow at residues 86–131 (EKRQ…DWSR) and 150–212 (RQHP…NSGN). Gln89 bears the Pyrrolidone carboxylic acid mark. At Pro91 the chain carries Proline amide. Gln105 carries the post-translational modification Pyrrolidone carboxylic acid. Pro107 is modified (proline amide). Residues 110-129 (RYLEDMEKRQHPGKREEGDW) are compositionally biased toward basic and acidic residues. Gln119 carries the post-translational modification Pyrrolidone carboxylic acid. Pro121 is subject to Proline amide. Residue Gln151 is modified to Pyrrolidone carboxylic acid. At Pro153 the chain carries Proline amide. Gln166 bears the Pyrrolidone carboxylic acid mark. Position 168 is a proline amide (Pro168). The segment covering 182–199 (ENSKEVGKRQHPGKRYDP) has biased composition (basic and acidic residues). Pyrrolidone carboxylic acid is present on Gln191. A Proline amide modification is found at Pro193.

Belongs to the TRH family.

The protein localises to the secreted. In Xenopus laevis (African clawed frog), this protein is Pro-thyrotropin-releasing hormone-B (trh-b).